The primary structure comprises 107 residues: uncharacterized protein (107 aa).

The chain crosses the membrane as a helical span at residues 13–33 (VLIVTFLSSFIFIVWLPVALV).

The protein localises to the membrane. This is an uncharacterized protein from Saccharomyces cerevisiae (strain ATCC 204508 / S288c) (Baker's yeast).